The sequence spans 239 residues: Norbelladine 4'-O-methyltransferase 3 (239 aa).

S-adenosyl-L-methionine is bound by residues valine 55, glutamate 77, 79–80 (GV), serine 85, aspartate 103, and alanine 132. Residue aspartate 155 participates in a divalent metal cation binding. Aspartate 157 lines the S-adenosyl-L-methionine pocket. Positions 181 and 182 each coordinate a divalent metal cation.

This sequence belongs to the class I-like SAM-binding methyltransferase superfamily. Cation-dependent O-methyltransferase family. Mg(2+) is required as a cofactor.

The enzyme catalyses norbelladine + S-adenosyl-L-methionine = 4'-O-methylnorbelladine + S-adenosyl-L-homocysteine + H(+). It functions in the pathway alkaloid biosynthesis. Its function is as follows. 4'-O-methyltransferase converting norbelladine to 4'-O-methylnorbelladine. 4'-O-methylnorbelladine is a precursor to all Amaryllidaceae alkaloids such as galanthamine, lycorine and haemanthamine, and including haemanthamine- and crinamine-type alkaloids, promising anticancer agents. This chain is Norbelladine 4'-O-methyltransferase 3, found in Narcissus aff. pseudonarcissus MK-2014 (Daffodil).